Consider the following 70-residue polypeptide: UPF0337 protein BT9727_3385 (70 aa).

The protein belongs to the UPF0337 (CsbD) family.

This chain is UPF0337 protein BT9727_3385, found in Bacillus thuringiensis subsp. konkukian (strain 97-27).